Reading from the N-terminus, the 563-residue chain is Autophagy-related protein 18 (563 aa).

WD repeat units lie at residues 36–74, 247–287, and 292–331; these read KTDDSVNFITFNQDASCIAVGLNNGYKIFNCKPKFGKCY, AHKS…KLFQ, and TYSTKIYSLSFSSDNNYVVATSSSETVHIFRLGESEALEN. The short motif at 288 to 292 is the L/FRRG motif element; sequence FRRGT. The disordered stretch occupies residues 329–430; sequence LENKHKKKKA…SSQAAKNEPL (102 aa). Acidic residues predominate over residues 366-393; the sequence is TQDDDEFADDGDDSDEAVEGDDNDDESL. Over residues 404–417 the composition is skewed to low complexity; that stretch reads SQGSSNSFASFNSG.

The protein belongs to the WD repeat PROPPIN family. Component of the PI(3,5)P2 regulatory complex.

The protein resides in the preautophagosomal structure membrane. It is found in the vacuole membrane. It localises to the endosome membrane. Its function is as follows. The PI(3,5)P2 regulatory complex regulates both the synthesis and turnover of phosphatidylinositol 3,5-bisphosphate (PtdIns(3,5)P2). Necessary for proper vacuole morphology. Plays an important role in osmotically-induced vacuole fragmentation. Required for cytoplasm to vacuole transport (Cvt) vesicle formation, pexophagy and starvation-induced autophagy. Involved in correct ATG9 trafficking to the pre-autophagosomal structure. Might also be involved in premeiotic DNA replication. In Scheffersomyces stipitis (strain ATCC 58785 / CBS 6054 / NBRC 10063 / NRRL Y-11545) (Yeast), this protein is Autophagy-related protein 18 (ATG18).